We begin with the raw amino-acid sequence, 338 residues long: Probable O-antigen biosynthesis glycosyltransferase WbiN (338 aa).

It belongs to the glycosyltransferase group 1 family. Glycosyltransferase 4 subfamily.

It catalyses the reaction N-acetyl-alpha-D-galactosaminyl-di-trans,octa-cis-undecaprenyl diphosphate + UDP-N-acetyl-alpha-D-galactosamine = alpha-D-GalNAc-(1-&gt;3)-alpha-D-GalNAc-di-trans,octa-cis-undecaprenyl diphosphate + UDP + H(+). The protein operates within bacterial outer membrane biogenesis; LPS O-antigen biosynthesis. Its function is as follows. Involved in the assembly of the O-repeating unit during O-antigen biosynthesis. This chain is Probable O-antigen biosynthesis glycosyltransferase WbiN, found in Escherichia coli.